The primary structure comprises 457 residues: DNA repair protein RadA (457 aa).

A C4-type zinc finger spans residues 12–29; it reads CQACGYESAKWMGKCPNC. Residue 97 to 104 coordinates ATP; the sequence is GDPGIGKS. The short motif at 254–258 is the RadA KNRFG motif element; sequence KNRFG. The interval 353–457 is lon-protease-like; that stretch reads DAYLKAAGGV…GEALKKALPD (105 aa).

This sequence belongs to the RecA family. RadA subfamily.

DNA-dependent ATPase involved in processing of recombination intermediates, plays a role in repairing DNA breaks. Stimulates the branch migration of RecA-mediated strand transfer reactions, allowing the 3' invading strand to extend heteroduplex DNA faster. Binds ssDNA in the presence of ADP but not other nucleotides, has ATPase activity that is stimulated by ssDNA and various branched DNA structures, but inhibited by SSB. Does not have RecA's homology-searching function. The sequence is that of DNA repair protein RadA from Listeria monocytogenes serovar 1/2a (strain ATCC BAA-679 / EGD-e).